The primary structure comprises 455 residues: Bifunctional protein GlmU (455 aa).

The pyrophosphorylase stretch occupies residues 1–229 (MLNSAMSVVI…ISETEGVNNR (229 aa)). UDP-N-acetyl-alpha-D-glucosamine contacts are provided by residues 11–14 (LAAG), lysine 25, glutamine 76, 81–82 (GT), 103–105 (YGD), glycine 140, glutamate 154, asparagine 169, and asparagine 227. A Mg(2+)-binding site is contributed by aspartate 105. Asparagine 227 contributes to the Mg(2+) binding site. The tract at residues 230-250 (LQLSRLERIYQAEQAEKLLLA) is linker. Residues 251–455 (GVMLRDPARF…KQGWQRPVKK (205 aa)) are N-acetyltransferase. UDP-N-acetyl-alpha-D-glucosamine-binding residues include arginine 333 and lysine 351. The active-site Proton acceptor is histidine 363. Residues tyrosine 366 and asparagine 377 each contribute to the UDP-N-acetyl-alpha-D-glucosamine site. Residues alanine 380, 386-387 (NY), serine 405, alanine 423, and arginine 440 each bind acetyl-CoA.

It in the N-terminal section; belongs to the N-acetylglucosamine-1-phosphate uridyltransferase family. The protein in the C-terminal section; belongs to the transferase hexapeptide repeat family. Homotrimer. Mg(2+) serves as cofactor.

It localises to the cytoplasm. The enzyme catalyses alpha-D-glucosamine 1-phosphate + acetyl-CoA = N-acetyl-alpha-D-glucosamine 1-phosphate + CoA + H(+). It catalyses the reaction N-acetyl-alpha-D-glucosamine 1-phosphate + UTP + H(+) = UDP-N-acetyl-alpha-D-glucosamine + diphosphate. It participates in nucleotide-sugar biosynthesis; UDP-N-acetyl-alpha-D-glucosamine biosynthesis; N-acetyl-alpha-D-glucosamine 1-phosphate from alpha-D-glucosamine 6-phosphate (route II): step 2/2. Its pathway is nucleotide-sugar biosynthesis; UDP-N-acetyl-alpha-D-glucosamine biosynthesis; UDP-N-acetyl-alpha-D-glucosamine from N-acetyl-alpha-D-glucosamine 1-phosphate: step 1/1. It functions in the pathway bacterial outer membrane biogenesis; LPS lipid A biosynthesis. Catalyzes the last two sequential reactions in the de novo biosynthetic pathway for UDP-N-acetylglucosamine (UDP-GlcNAc). The C-terminal domain catalyzes the transfer of acetyl group from acetyl coenzyme A to glucosamine-1-phosphate (GlcN-1-P) to produce N-acetylglucosamine-1-phosphate (GlcNAc-1-P), which is converted into UDP-GlcNAc by the transfer of uridine 5-monophosphate (from uridine 5-triphosphate), a reaction catalyzed by the N-terminal domain. The chain is Bifunctional protein GlmU from Salmonella arizonae (strain ATCC BAA-731 / CDC346-86 / RSK2980).